Consider the following 638-residue polypeptide: 1-deoxy-D-xylulose-5-phosphate synthase (638 aa).

Thiamine diphosphate is bound by residues His71 and 112–114; that span reads SHA. Mg(2+) is bound at residue Asp144. Thiamine diphosphate-binding positions include 145–146, Asn173, Tyr284, and Glu365; that span reads GA. Asn173 provides a ligand contact to Mg(2+).

Belongs to the transketolase family. DXPS subfamily. As to quaternary structure, homodimer. Mg(2+) serves as cofactor. Requires thiamine diphosphate as cofactor.

The enzyme catalyses D-glyceraldehyde 3-phosphate + pyruvate + H(+) = 1-deoxy-D-xylulose 5-phosphate + CO2. It participates in metabolic intermediate biosynthesis; 1-deoxy-D-xylulose 5-phosphate biosynthesis; 1-deoxy-D-xylulose 5-phosphate from D-glyceraldehyde 3-phosphate and pyruvate: step 1/1. Catalyzes the acyloin condensation reaction between C atoms 2 and 3 of pyruvate and glyceraldehyde 3-phosphate to yield 1-deoxy-D-xylulose-5-phosphate (DXP). This is 1-deoxy-D-xylulose-5-phosphate synthase from Mycobacterium bovis (strain ATCC BAA-935 / AF2122/97).